A 327-amino-acid polypeptide reads, in one-letter code: GTPase Obg (327 aa).

Positions Asn-3 to Leu-160 constitute an Obg domain. The 167-residue stretch at Ala-161 to Ser-327 folds into the OBG-type G domain. GTP contacts are provided by residues Gly-167 to Ser-174, Phe-192 to Asn-196, Asp-214 to Gly-217, Ser-281 to Asp-284, and Ser-308 to Phe-310. The Mg(2+) site is built by Ser-174 and Thr-194.

Belongs to the TRAFAC class OBG-HflX-like GTPase superfamily. OBG GTPase family. Monomer. It depends on Mg(2+) as a cofactor.

It localises to the cytoplasm. Functionally, an essential GTPase which binds GTP, GDP and possibly (p)ppGpp with moderate affinity, with high nucleotide exchange rates and a fairly low GTP hydrolysis rate. Plays a role in control of the cell cycle, stress response, ribosome biogenesis and in those bacteria that undergo differentiation, in morphogenesis control. This Karelsulcia muelleri (strain GWSS) (Sulcia muelleri) protein is GTPase Obg.